The chain runs to 379 residues: Mating-type protein MAT-1 (379 aa).

The segment at residues 60 to 117 (RARKALNAFVRFRCYYVAIPMFKQWPMKKLSNLIGLLWEADPNKSLWSLMTKAWSTIR) is a DNA-binding region (alpha box).

It belongs to the MATALPHA1 family.

The protein localises to the nucleus. Functionally, mating type proteins are sequence specific DNA-binding proteins that act as master switches in fungal differentiation by controlling gene expression in a cell type-specific fashion. Transcriptional activator that induces the transcription of alpha-specific genes. This is Mating-type protein MAT-1 (MAT1) from Curvularia kusanoi (Cochliobolus kusanoi).